A 547-amino-acid chain; its full sequence is Putative HMP/thiamine import ATP-binding protein YkoD (547 aa).

ABC transporter domains lie at 8 to 250 (LTVE…KLGI) and 295 to 523 (LEVS…KAKL). ATP is bound by residues 42 to 49 (GPSGCGKS) and 327 to 334 (GPNGTGKS).

Belongs to the ABC transporter superfamily. As to quaternary structure, the complex is composed of two ATP-binding proteins (YkoD), two transmembrane proteins (YkoC and YkoE) and a solute-binding protein (YkoF).

It localises to the cell membrane. Functionally, part of the ABC transporter complex YkoCDEF that could transport hydroxymethylpyrimidine (HMP) and/or thiamine. Could also transport other HMP-containing products. Responsible for energy coupling to the transport system. This Bacillus subtilis (strain 168) protein is Putative HMP/thiamine import ATP-binding protein YkoD (ykoD).